A 310-amino-acid chain; its full sequence is tRNA dimethylallyltransferase (310 aa).

Position 13-20 (13-20) interacts with ATP; the sequence is GPTASGKT. 15 to 20 contributes to the substrate binding site; the sequence is TASGKT. Interaction with substrate tRNA regions lie at residues 38–41, 162–166, 243–248, and 276–283; these read DSAL, QRLSR, RCVGYR, and KRQITWLR.

It belongs to the IPP transferase family. In terms of assembly, monomer. It depends on Mg(2+) as a cofactor.

The catalysed reaction is adenosine(37) in tRNA + dimethylallyl diphosphate = N(6)-dimethylallyladenosine(37) in tRNA + diphosphate. Its function is as follows. Catalyzes the transfer of a dimethylallyl group onto the adenine at position 37 in tRNAs that read codons beginning with uridine, leading to the formation of N6-(dimethylallyl)adenosine (i(6)A). This Aliivibrio fischeri (strain ATCC 700601 / ES114) (Vibrio fischeri) protein is tRNA dimethylallyltransferase.